The chain runs to 483 residues: Regulatory protein ViaA (483 aa).

This sequence belongs to the ViaA family. Homodimer. Interacts with RavA.

It is found in the cytoplasm. Its function is as follows. Component of the RavA-ViaA chaperone complex, which may act on the membrane to optimize the function of some of the respiratory chains. ViaA stimulates the ATPase activity of RavA. The protein is Regulatory protein ViaA of Salmonella typhi.